The primary structure comprises 178 residues: uncharacterized protein (178 aa).

5 helical membrane-spanning segments follow: residues 13–33 (GIVL…FFMP), 48–68 (MLNA…LIMI), 80–100 (ILAA…YHSI), 115–135 (IYFF…PLAL), and 155–175 (WTMP…LMIS).

Its subcellular location is the cell membrane. This is an uncharacterized protein from Bacillus subtilis (strain 168).